The chain runs to 206 residues: Large ribosomal subunit protein uL22m (206 aa).

The N-terminal 40 residues, Met1 to Asp40, are a transit peptide targeting the mitochondrion.

The protein belongs to the universal ribosomal protein uL22 family. In terms of assembly, component of the mitochondrial ribosome large subunit (39S) which comprises a 16S rRNA and about 50 distinct proteins.

It localises to the mitochondrion. The sequence is that of Large ribosomal subunit protein uL22m (MRPL22) from Pongo abelii (Sumatran orangutan).